The chain runs to 354 residues: MNRQDHGPAAVQTLRWREGRLEMIDQRVLPARFEYLPFTSAAEVAEGIRSMVVRGAPAIGCAAAYGVALESVQLRGATREAFAVGLQRGFDVLAASRPTAVNLFWALARMRAVWDANQHRAVGDIVDCLLAQAHEISADDVRINRAMGAYGAALLADGARVLTHCNAGALATAGHGTALGVIRSAVQAGKRISVIADETRPFLQGARLTAWEMVQENIPVTLITDNMAGHLMSRGEVDAIVVGTDRVAANGDVANKIGTYMVAVLAQRHNIPFYVACPLSTIDLAIPDGAAIPIEERAAEEVTGFRDCQWAAKGVQVRNPAFDVTPAELVTALITERGVLRQPNRTTIAGLFAT.

Residues 54–56, arginine 97, and glutamine 204 contribute to the substrate site; that span reads RGA. The active-site Proton donor is aspartate 245. 255–256 lines the substrate pocket; sequence NK.

This sequence belongs to the eIF-2B alpha/beta/delta subunits family. MtnA subfamily.

It carries out the reaction 5-(methylsulfanyl)-alpha-D-ribose 1-phosphate = 5-(methylsulfanyl)-D-ribulose 1-phosphate. It participates in amino-acid biosynthesis; L-methionine biosynthesis via salvage pathway; L-methionine from S-methyl-5-thio-alpha-D-ribose 1-phosphate: step 1/6. Functionally, catalyzes the interconversion of methylthioribose-1-phosphate (MTR-1-P) into methylthioribulose-1-phosphate (MTRu-1-P). This chain is Methylthioribose-1-phosphate isomerase, found in Albidiferax ferrireducens (strain ATCC BAA-621 / DSM 15236 / T118) (Rhodoferax ferrireducens).